The chain runs to 142 residues: MFACAKLACTPSLIRAGSRVAYRPISASVLSRPEASRTGEGSTVFNGAQNGVSQLIQREFQTSAISRDIDTAAKFIGAGAATVGVAGSGAGIGTVFGSLIIGYARNPSLKQQLFSYAILGFALSEAMGLFCLMVAFLILFAM.

Residues M1–R67 constitute a mitochondrion transit peptide. A helical membrane pass occupies residues V83 to Y103. K110 carries the post-translational modification N6,N6,N6-trimethyllysine. The chain crosses the membrane as a helical span at residues I118–I138.

It belongs to the ATPase C chain family. F-type ATPases have 2 components, CF(1) - the catalytic core - and CF(0) - the membrane proton channel. CF(1) has five subunits: alpha(3), beta(3), gamma(1), delta(1), epsilon(1). CF(0) has three main subunits: a, b and c. Interacts with TMEM70 and TMEM242. Post-translationally, trimethylated by ATPSCKMT at Lys-110. Methylation is required for proper incorporation of the C subunit into the ATP synthase complex and mitochondrial respiration.

The protein resides in the mitochondrion membrane. Functionally, mitochondrial membrane ATP synthase (F(1)F(0) ATP synthase or Complex V) produces ATP from ADP in the presence of a proton gradient across the membrane which is generated by electron transport complexes of the respiratory chain. F-type ATPases consist of two structural domains, F(1) - containing the extramembraneous catalytic core and F(0) - containing the membrane proton channel, linked together by a central stalk and a peripheral stalk. During catalysis, ATP synthesis in the catalytic domain of F(1) is coupled via a rotary mechanism of the central stalk subunits to proton translocation. Part of the complex F(0) domain. A homomeric c-ring of probably 10 subunits is part of the complex rotary element. The protein is ATP synthase F(0) complex subunit C3, mitochondrial of Homo sapiens (Human).